We begin with the raw amino-acid sequence, 282 residues long: uncharacterized protein (282 aa).

The next 4 helical transmembrane spans lie at 130-150, 170-190, 191-211, and 223-243; these read WALLCVGIAQIALGTVQGFGL, STSWSIALGVIMVGAALWPSA, AAGLAGVLTAFVAILTGYVIV, and ILTHLPVVIGAVLAIMVWRSA. The tract at residues 263–282 is disordered; that stretch reads DNASRGRRRGHLWPTDGSAA.

Its subcellular location is the cell membrane. This is an uncharacterized protein from Mycobacterium tuberculosis (strain CDC 1551 / Oshkosh).